Reading from the N-terminus, the 588-residue chain is Snake venom 5'-nucleotidase (588 aa).

Residues 1-40 (MQTPKRRRGAQGCPRSSPSPPLLLLVGAVWFCAALSVAAG) form the signal peptide. Asp51 and His53 together coordinate Zn(2+). Cys66 and Cys71 form a disulfide bridge. A glycan (N-linked (GlcNAc...) asparagine) is linked at Asn88. 2 residues coordinate Zn(2+): Asp99 and Asn131. Asn167 carries an N-linked (GlcNAc...) asparagine glycan. Zn(2+) is bound by residues His234 and His257. N-linked (GlcNAc...) asparagine glycans are attached at residues Asn327, Asn347, and Asn361. 2 disulfide bridges follow: Cys367–Cys372 and Cys379–Cys401. AMP is bound at residue Arg368. Residues Asn404 and Arg409 each contribute to the AMP site. A glycan (N-linked (GlcNAc...) asparagine) is linked at Asn418. Phe432 provides a ligand contact to AMP. The cysteines at positions 491 and 494 are disulfide-linked. 2 residues coordinate AMP: Phe515 and Asp521. N-linked (GlcNAc...) asparagine glycosylation is present at Asn532. A lipid anchor (GPI-anchor amidated serine) is attached at Ser564. Positions 565–588 (AGTLFQAQLFLTWGLCISLLYFIL) are cleaved as a propeptide — removed in mature form.

It belongs to the 5'-nucleotidase family. Requires Zn(2+) as cofactor. Post-translationally, venom 5'-nucleotidases (or a part thereof) may be released into the venom via exosome-like vesicles. They may be attached via a GPI anchor to the membrane of these vesicles. Soluble forms of 5'-nucleotidase might be released by cleavage of the ectodomain in the exosome-like vesicles or venom gland cells. In terms of tissue distribution, expressed by the venom gland.

It localises to the membrane. It carries out the reaction a ribonucleoside 5'-phosphate + H2O = a ribonucleoside + phosphate. In terms of biological role, hydrolyzes nucleotides into nucleosides. Snake venom 5'-nucleotidases are widely distributed among venomous snake taxa, but there is a lack of information about their biological activities. They have been shown to inhibit platelet aggregation. This effect may be due to the liberation of inhibitory AMP or adenosine by its action on ADP released upon initiation of aggregation. Venom 5'-nucleotidases are also known to synergistically act in vivo with other toxins like ADPases, phospholipases, and disintegrins to exert a more pronounced anti-coagulant effect. The polypeptide is Snake venom 5'-nucleotidase (Gloydius brevicauda (Korean slamosa snake)).